A 321-amino-acid chain; its full sequence is Cytochrome c biogenesis protein CcsA (321 aa).

A run of 7 helical transmembrane segments spans residues 9–29, 44–64, 68–88, 143–163, 226–246, 260–274, and 289–309; these read ILTHISFSTISIVITIHLITL, GMIATFFCITGFLVSRWASSG, LSNLYESLIFLSWALYILHMI, MLLSYATLLCGSLLSAALLMI, VISLGFTLLTIGILCGAVWAN, TWAFITWTIFAIYLH, and VASIGFLIIWICYFGINLLGI.

This sequence belongs to the CcmF/CycK/Ccl1/NrfE/CcsA family. As to quaternary structure, may interact with Ccs1.

The protein resides in the plastid. The protein localises to the chloroplast thylakoid membrane. Functionally, required during biogenesis of c-type cytochromes (cytochrome c6 and cytochrome f) at the step of heme attachment. In Oryza sativa (Rice), this protein is Cytochrome c biogenesis protein CcsA.